Consider the following 145-residue polypeptide: Maximins 5/H4 type 1 (145 aa).

Residues 1 to 18 (MNFKYIVAVSFLIASAYA) form the signal peptide. 2 propeptides span residues 19–43 (RSVQ…REIR) and 74–124 (TAEE…KEKR). A Leucine amide modification is found at L144.

The protein belongs to the bombinin family. As to expression, expressed by the skin glands.

Its subcellular location is the secreted. Its function is as follows. Maximin-5 shows antibacterial activity against both Gram-positive and Gram-negative bacteria. The only exception is the resistance of E.coli. Also shows antimicrobial activity against fungi C.albicans, A.flavus and P.uticale. It has little hemolytic activity. It does not possess a significant cytotoxicity against tumor cell lines. It does not possess a significant anti-HIV activity. Functionally, maximin-H4 shows antibacterial activity against both Gram-positive and Gram-negative bacteria. It also shows antimicrobial activity against the fungus C.albicans. Shows strong hemolytic activity. This is Maximins 5/H4 type 1 from Bombina maxima (Giant fire-bellied toad).